An 86-amino-acid polypeptide reads, in one-letter code: U15-lycotoxin-Ls1d (86 aa).

Residues 1–20 (MNSKIFAVLLLLAFLSCVLS) form the signal peptide. Residues 21–66 (DQYCPKSSITACKKMNIRNDCCKDDDCTGGSWCCATPCGNFCKYPT) enclose the WAP domain. Intrachain disulfides connect C24-C54, C32-C58, C41-C53, C42-C80, and C47-C62.

The protein belongs to the venom protein 11 family. 01 (wap-1) subfamily. In terms of processing, contains 5 disulfide bonds. In terms of tissue distribution, expressed by the venom gland.

It is found in the secreted. Has antibacterial activity. The polypeptide is U15-lycotoxin-Ls1d (Lycosa singoriensis (Wolf spider)).